Here is a 233-residue protein sequence, read N- to C-terminus: MFRIIKWLIALPVGIFIFFNAYVYGNIITYRAVAPHRTAFMSMRMKQFEQEGRDVALDYRWMPYKRISTNLKKALIASEDARFAGHGGFDWGGIQNAIRRNRNSGKVKAGGSTISQQLAKNLFLNESRSYIRKGEEAAITAMMEAVTDKDRIFELYLNSIEWHYGVFGAEAASRYFYQIPAAKLTKQQAAKLTARVPAPLYYADHPKSKRLRNKTNIVLKRMGSAELPESDTD.

Residues 8–28 (LIALPVGIFIFFNAYVYGNII) form a helical membrane-spanning segment.

The protein belongs to the glycosyltransferase 51 family.

The protein resides in the cell inner membrane. It catalyses the reaction [GlcNAc-(1-&gt;4)-Mur2Ac(oyl-L-Ala-gamma-D-Glu-L-Lys-D-Ala-D-Ala)](n)-di-trans,octa-cis-undecaprenyl diphosphate + beta-D-GlcNAc-(1-&gt;4)-Mur2Ac(oyl-L-Ala-gamma-D-Glu-L-Lys-D-Ala-D-Ala)-di-trans,octa-cis-undecaprenyl diphosphate = [GlcNAc-(1-&gt;4)-Mur2Ac(oyl-L-Ala-gamma-D-Glu-L-Lys-D-Ala-D-Ala)](n+1)-di-trans,octa-cis-undecaprenyl diphosphate + di-trans,octa-cis-undecaprenyl diphosphate + H(+). It functions in the pathway cell wall biogenesis; peptidoglycan biosynthesis. Functionally, peptidoglycan polymerase that catalyzes glycan chain elongation from lipid-linked precursors. This is Biosynthetic peptidoglycan transglycosylase from Neisseria meningitidis serogroup B (strain ATCC BAA-335 / MC58).